The chain runs to 730 residues: Trimethylamine dehydrogenase (730 aa).

Residues P29, C31, Y61, and E104 each coordinate FMN. S-6-FMN cysteine is present on C31. Y170 to H173 contacts substrate. Y175 functions as the Proton donor in the catalytic mechanism. Positions 223, 268, 300, 322, and 323 each coordinate FMN. The [4Fe-4S] cluster site is built by C346, C349, C352, and C365. 6 residues coordinate ADP: S401, D420, T421, H428, M471, and D675.

The protein in the N-terminal section; belongs to the NADH:flavin oxidoreductase/NADH oxidase family. As to quaternary structure, homodimer. Forms a ternary complex with the heterodimeric electron transfer flavoprotein. The cofactor is FMN. [4Fe-4S] cluster is required as a cofactor.

It catalyses the reaction trimethylamine + oxidized [electron-transfer flavoprotein] + H2O + H(+) = dimethylamine + reduced [electron-transfer flavoprotein] + formaldehyde. The sequence is that of Trimethylamine dehydrogenase from Methylophilus methylotrophus (Bacterium W3A1).